The chain runs to 472 residues: Alanine--anticapsin ligase (472 aa).

Position 109 (Glu-109) interacts with Mg(2+). Residues Lys-138 and Lys-178 each coordinate ATP. The 214-residue stretch at 142–355 (RDAFNKAGVK…MAQLLLDVLC (214 aa)) folds into the ATP-grasp domain. Leu-182 is a Mg(2+) binding site. ATP contacts are provided by residues 184 to 185 (SS), 226 to 229 (EEFL), and Gln-268. Substrate contacts are provided by residues Glu-273 and 309–311 (HTE). Mg(2+)-binding residues include Glu-311 and Glu-324. Substrate is bound at residue 328-331 (RFAG).

In terms of assembly, monomer or homodimer. Mg(2+) is required as a cofactor.

It carries out the reaction L-anticapsin + L-alanine + ATP = bacilysin + ADP + phosphate + H(+). It participates in antibiotic biosynthesis; bacilysin biosynthesis. In terms of biological role, part of the bacABCDEFG operon responsible for the biosynthesis of bacilysin, an irreversible inactivator of the glutaminase domain of glucosamine synthetase. Catalyzes the formation of alpha-dipeptides from various L-amino acids in the presence of ATP. In vivo catalyzes the ligation of L-alanine and L-anticapsin (epoxycyclohexanonyl-Ala) to produce the final bacilysin antibiotic (L-Ala-L-4S-cyclohexenonyl-Ala dipeptide). The substrate specificity is restricted to small amino acids such as L-Ala, for the N-terminal end of the dipeptide, whereas a wide range of hydrophobic amino acids such as L-Phe, L-Tyr and L-Met are recognized for the C-terminal end. The polypeptide is Alanine--anticapsin ligase (Bacillus subtilis (strain 168)).